A 424-amino-acid polypeptide reads, in one-letter code: Hemagglutinin-esterase (424 aa).

An N-terminal signal peptide occupies residues 1–16 (MFLLPRFILVSCIIGS). The interval 7–127 (FILVSCIIGS…SNDIWMQNKG (121 aa)) is esterase domain 1. At 17–392 (LGFYNPPTNV…PICVYDPLPV (376 aa)) the chain is on the virion surface side. Serine 40 serves as the catalytic Nucleophile. The cysteines at positions 44 and 65 are disulfide-linked. 6 N-linked (GlcNAc...) asparagine; by host glycosylation sites follow: asparagine 54, asparagine 89, asparagine 114, asparagine 153, asparagine 236, and asparagine 301. Disulfide bonds link cysteine 113/cysteine 162, cysteine 197/cysteine 276, and cysteine 205/cysteine 249. Residues 128–266 (LFYTQVYKNM…GNYLAISNEL (139 aa)) form a receptor binding region. Residues 267–379 (LLTVPTKAIC…RCPTAADINN (113 aa)) form an esterase domain 2 region. The cysteines at positions 307 and 312 are disulfide-linked. A glycan (N-linked (GlcNAc...) asparagine; by host) is linked at asparagine 316. Residues aspartate 326 and histidine 329 each act as charge relay system in the active site. A disulfide bond links cysteine 347 and cysteine 371. Asparagine 358 is a glycosylation site (N-linked (GlcNAc...) asparagine; by host). Residues 393–413 (ILLGILLGVAVIIIVVLLLYF) form a helical membrane-spanning segment. Residues 414–424 (MVDNGTRLHDA) are Intravirion-facing. A glycan (N-linked (GlcNAc...) asparagine; by host) is linked at asparagine 417.

The protein belongs to the influenza type C/coronaviruses hemagglutinin-esterase family. In terms of assembly, homodimer; disulfide-linked. Forms a complex with the M protein in the pre-Golgi. Associates then with S-M complex to form a ternary complex S-M-HE. Post-translationally, N-glycosylated in the host RER.

The protein resides in the virion membrane. The protein localises to the host cell membrane. The catalysed reaction is N-acetyl-9-O-acetylneuraminate + H2O = N-acetylneuraminate + acetate + H(+). It catalyses the reaction N-acetyl-4-O-acetylneuraminate + H2O = N-acetylneuraminate + acetate + H(+). In terms of biological role, structural protein that makes short spikes at the surface of the virus. Contains receptor binding and receptor-destroying activities. Mediates de-O-acetylation of N-acetyl-4-O-acetylneuraminic acid, which is probably the receptor determinant recognized by the virus on the surface of erythrocytes and susceptible cells. This receptor-destroying activity is important for virus release as it probably helps preventing self-aggregation and ensures the efficient spread of the progeny virus from cell to cell. May serve as a secondary viral attachment protein for initiating infection, the spike protein being the major one. May become a target for both the humoral and the cellular branches of the immune system. This Homo sapiens (Human) protein is Hemagglutinin-esterase.